We begin with the raw amino-acid sequence, 439 residues long: Kelch domain-containing protein 10 (439 aa).

Residues 1–50 (MSAAQGWDRNRRRGGGAAGGASGVSGAGAAGGGRGTGQLNRFVQLSGRPH) are disordered. Arginine 13 is subject to Omega-N-methylarginine. Over residues 15 to 36 (GGAAGGASGVSGAGAAGGGRGT) the composition is skewed to gly residues. 6 Kelch repeats span residues 87 to 154 (PARS…LASM), 155 to 198 (SLVL…SCRG), 199 to 260 (KRPS…RYRH), 261 to 319 (EIAH…HSCV), 320 to 364 (QIKN…VYFH), and 365 to 403 (CAAV…PSLL). An interaction with CUL2 region spans residues 398 to 439 (VVPSLLELAWEKLLAAFPNLANLSRTQLLHLGLTQELIERLK).

This sequence belongs to the KLHDC10 family. In terms of assembly, component of a CRL2 E3 ubiquitin-protein ligase complex, also named ECS (Elongin BC-CUL2/5-SOCS-box protein) complex, composed of CUL2, Elongin BC (ELOB and ELOC), RBX1 and substrate-specific adapter KLHDC10. Interacts (via the 6 Kelch repeats) with PPP5C.

It is found in the nucleus. Its subcellular location is the cytoplasm. Its pathway is protein modification; protein ubiquitination. Functionally, substrate-recognition component of a Cul2-RING (CRL2) E3 ubiquitin-protein ligase complex of the DesCEND (destruction via C-end degrons) pathway, which recognizes a C-degron located at the extreme C-terminus of target proteins, leading to their ubiquitination and degradation. The C-degron recognized by the DesCEND pathway is usually a motif of less than ten residues and can be present in full-length proteins, truncated proteins or proteolytically cleaved forms. The CRL2(KLHDC10) complex specifically recognizes proteins with a proline-glycine (Pro-Gly) or an alanine tail (CAT tail) at the C-terminus, leading to their ubiquitination and degradation. The CRL2(KLHDC10) complex is involved in the ribosome-associated quality control (RQC) pathway, which mediates the extraction of incompletely synthesized nascent chains from stalled ribosomes: CRL2(KLHDC10) acts downstream of NEMF and recognizes CAT tails associated with stalled nascent chains, leading to their ubiquitination and degradation. Participates in the oxidative stress-induced cell death through MAP3K5 activation. Inhibits PPP5C phosphatase activity on MAP3K5. Acts as a regulator of necroptosis. The chain is Kelch domain-containing protein 10 from Mus musculus (Mouse).